The chain runs to 450 residues: Sulfide:quinone oxidoreductase, mitochondrial (450 aa).

FAD contacts are provided by residues 53 to 54 (AG), Glu75, Gln83, and Val118. 2 positions are modified to N6-acetyllysine: Lys134 and Lys173. The active-site Cysteine persulfide intermediate is Cys201. Cys201 and Cys379 are oxidised to a cystine. Residue Asp336 coordinates FAD. Ser343 bears the Phosphoserine mark. Position 344-347 (344-347 (KTAA)) interacts with FAD. The Cysteine persulfide intermediate role is filled by Cys379.

It belongs to the SQRD family. FAD serves as cofactor.

It localises to the mitochondrion. It carries out the reaction ubiquinone-10 + hydrogen sulfide + sulfite + 2 H(+) = ubiquinol-10 + thiosulfate. The catalysed reaction is a quinone + hydrogen sulfide + glutathione + H(+) = S-sulfanylglutathione + a quinol. It catalyses the reaction ubiquinone-10 + hydrogen sulfide + glutathione + H(+) = S-sulfanylglutathione + ubiquinol-10. Catalyzes the oxidation of hydrogen sulfide with the help of a quinone, such as ubiquinone-10, giving rise to thiosulfate and ultimately to sulfane (molecular sulfur) atoms. Requires an additional electron acceptor; can use sulfite, sulfide or cyanide (in vitro). It is believed the in vivo electron acceptor is glutathione. The protein is Sulfide:quinone oxidoreductase, mitochondrial of Mus musculus (Mouse).